Consider the following 286-residue polypeptide: Bifunctional protein FolD (286 aa).

Residues 164–166 (GRS), Ser-193, and Ile-234 contribute to the NADP(+) site.

The protein belongs to the tetrahydrofolate dehydrogenase/cyclohydrolase family. As to quaternary structure, homodimer.

It carries out the reaction (6R)-5,10-methylene-5,6,7,8-tetrahydrofolate + NADP(+) = (6R)-5,10-methenyltetrahydrofolate + NADPH. The catalysed reaction is (6R)-5,10-methenyltetrahydrofolate + H2O = (6R)-10-formyltetrahydrofolate + H(+). Its pathway is one-carbon metabolism; tetrahydrofolate interconversion. Catalyzes the oxidation of 5,10-methylenetetrahydrofolate to 5,10-methenyltetrahydrofolate and then the hydrolysis of 5,10-methenyltetrahydrofolate to 10-formyltetrahydrofolate. The chain is Bifunctional protein FolD from Maridesulfovibrio salexigens (strain ATCC 14822 / DSM 2638 / NCIMB 8403 / VKM B-1763) (Desulfovibrio salexigens).